A 469-amino-acid chain; its full sequence is Ribulose bisphosphate carboxylase large chain (469 aa).

Asparagine 115 and threonine 165 together coordinate substrate. Lysine 167 (proton acceptor) is an active-site residue. Substrate is bound at residue lysine 169. Mg(2+)-binding residues include lysine 193, aspartate 195, and glutamate 196. Residue lysine 193 is modified to N6-carboxylysine. The Proton acceptor role is filled by histidine 286. Substrate-binding residues include arginine 287, histidine 319, and serine 371.

The protein belongs to the RuBisCO large chain family. Type I subfamily. As to quaternary structure, heterohexadecamer of 8 large chains and 8 small chains. It depends on Mg(2+) as a cofactor.

The protein resides in the plastid. It localises to the organellar chromatophore. It catalyses the reaction 2 (2R)-3-phosphoglycerate + 2 H(+) = D-ribulose 1,5-bisphosphate + CO2 + H2O. The catalysed reaction is D-ribulose 1,5-bisphosphate + O2 = 2-phosphoglycolate + (2R)-3-phosphoglycerate + 2 H(+). RuBisCO catalyzes two reactions: the carboxylation of D-ribulose 1,5-bisphosphate, the primary event in carbon dioxide fixation, as well as the oxidative fragmentation of the pentose substrate. Both reactions occur simultaneously and in competition at the same active site. In Paulinella chromatophora, this protein is Ribulose bisphosphate carboxylase large chain.